The following is a 402-amino-acid chain: UDP-glucose 6-dehydrogenase (402 aa).

Residues Lys2–Leu19, Val11, Asp29, Lys34, Thr83, Thr118, and Glu145 contribute to the NAD(+) site. Substrate contacts are provided by residues Glu141–Glu145, Lys204, Asn208, Tyr249–Ser253, and Gly257. NAD(+) is bound at residue Tyr259. The active-site Nucleophile is the Cys260. Lys263 serves as a coordination point for NAD(+). Lys320 contacts substrate. Arg327 serves as a coordination point for NAD(+).

Belongs to the UDP-glucose/GDP-mannose dehydrogenase family.

The enzyme catalyses UDP-alpha-D-glucose + 2 NAD(+) + H2O = UDP-alpha-D-glucuronate + 2 NADH + 3 H(+). The protein operates within nucleotide-sugar biosynthesis; UDP-alpha-D-glucuronate biosynthesis; UDP-alpha-D-glucuronate from UDP-alpha-D-glucose: step 1/1. Its function is as follows. Catalyzes the formation of UDP-glucuronic acid which is required for capsular hyaluronic acid synthesis. The sequence is that of UDP-glucose 6-dehydrogenase (hasB) from Streptococcus pyogenes serotype M3 (strain ATCC BAA-595 / MGAS315).